The primary structure comprises 37 residues: Potassium channel toxin alpha-KTx 2.14 (37 aa).

3 cysteine pairs are disulfide-bonded: C7–C28, C13–C33, and C17–C35.

The protein belongs to the short scorpion toxin superfamily. Potassium channel inhibitor family. Alpha-KTx 02 subfamily. In terms of tissue distribution, expressed by the venom gland.

It localises to the secreted. Reversibly blocks hKv1.1/KCNA1 (50% inhibition of current at 1 uM). Seems not to be voltage-dependent. This chain is Potassium channel toxin alpha-KTx 2.14, found in Heteroctenus garridoi (Cuban scorpion).